We begin with the raw amino-acid sequence, 109 residues long: MRLVARVTVFLTFGTIIDAKTTQPTSMDCAEGRAANLPCNHSTISGNEYVYWYRQIHSQGPQYIIHGLKNNETNEMASLIITEDRKSSTLILPHATLRDTAVYYCIVRV.

An N-terminal signal peptide occupies residues 1–19; it reads MRLVARVTVFLTFGTIIDA. Positions 20-109 constitute an Ig-like domain; it reads KTTQPTSMDC…TAVYYCIVRV (90 aa). A disulfide bond links cysteine 39 and cysteine 105. Asparagine 40 and asparagine 71 each carry an N-linked (GlcNAc...) asparagine glycan.

As to quaternary structure, alpha-beta TR is a heterodimer composed of an alpha and beta chain; disulfide-linked. The alpha-beta TR is associated with the transmembrane signaling CD3 coreceptor proteins to form the TR-CD3 (TcR or TCR). The assembly of alpha-beta TR heterodimers with CD3 occurs in the endoplasmic reticulum where a single alpha-beta TR heterodimer associates with one CD3D-CD3E heterodimer, one CD3G-CD3E heterodimer and one CD247 homodimer forming a stable octameric structure. CD3D-CD3E and CD3G-CD3E heterodimers preferentially associate with TR alpha and TR beta chains, respectively. The association of the CD247 homodimer is the last step of TcR assembly in the endoplasmic reticulum and is required for transport to the cell surface.

The protein resides in the cell membrane. Its function is as follows. V region of the variable domain of T cell receptor (TR) alpha chain that participates in the antigen recognition. Alpha-beta T cell receptors are antigen specific receptors which are essential to the immune response and are present on the cell surface of T lymphocytes. Recognize peptide-major histocompatibility (MH) (pMH) complexes that are displayed by antigen presenting cells (APC), a prerequisite for efficient T cell adaptive immunity against pathogens. Binding of alpha-beta TR to pMH complex initiates TR-CD3 clustering on the cell surface and intracellular activation of LCK that phosphorylates the ITAM motifs of CD3G, CD3D, CD3E and CD247 enabling the recruitment of ZAP70. In turn ZAP70 phosphorylates LAT, which recruits numerous signaling molecules to form the LAT signalosome. The LAT signalosome propagates signal branching to three major signaling pathways, the calcium, the mitogen-activated protein kinase (MAPK) kinase and the nuclear factor NF-kappa-B (NF-kB) pathways, leading to the mobilization of transcription factors that are critical for gene expression and essential for T cell growth and differentiation. The T cell repertoire is generated in the thymus, by V-(D)-J rearrangement. This repertoire is then shaped by intrathymic selection events to generate a peripheral T cell pool of self-MH restricted, non-autoaggressive T cells. Post-thymic interaction of alpha-beta TR with the pMH complexes shapes TR structural and functional avidity. The polypeptide is T cell receptor alpha variable 26-1 (Homo sapiens (Human)).